The primary structure comprises 87 residues: MKHLKFYSILFLFSIFVYKVNALQKILDGYFLSDEEGLFLSCKHKFDEYFCLEKCVESGAKDGYCVGHSFICFCKYEVGSSPRHFMF.

The N-terminal stretch at 1 to 22 (MKHLKFYSILFLFSIFVYKVNA) is a signal peptide. Cystine bridges form between cysteine 42/cysteine 65, cysteine 51/cysteine 72, and cysteine 55/cysteine 74.

This sequence belongs to the long (3 C-C) scorpion toxin superfamily. Sodium channel inhibitor family. As to expression, expressed by the venom gland.

The protein localises to the secreted. Functionally, putative sodium channel toxin. In Tityus serrulatus (Brazilian scorpion), this protein is Putative sodium channel toxin Ts38.